Reading from the N-terminus, the 410-residue chain is Cysteine desulfurase IscS (410 aa).

Residues 80-81 (AT), asparagine 160, glutamine 188, and 208-210 (SGH) contribute to the pyridoxal 5'-phosphate site. The residue at position 211 (lysine 211) is an N6-(pyridoxal phosphate)lysine. Position 248 (threonine 248) interacts with pyridoxal 5'-phosphate. Cysteine 334 (cysteine persulfide intermediate) is an active-site residue. Cysteine 334 contributes to the [2Fe-2S] cluster binding site.

This sequence belongs to the class-V pyridoxal-phosphate-dependent aminotransferase family. NifS/IscS subfamily. In terms of assembly, homodimer. Forms a heterotetramer with IscU, interacts with other sulfur acceptors. The cofactor is pyridoxal 5'-phosphate.

It localises to the cytoplasm. The enzyme catalyses (sulfur carrier)-H + L-cysteine = (sulfur carrier)-SH + L-alanine. It functions in the pathway cofactor biosynthesis; iron-sulfur cluster biosynthesis. In terms of biological role, master enzyme that delivers sulfur to a number of partners involved in Fe-S cluster assembly, tRNA modification or cofactor biosynthesis. Catalyzes the removal of elemental sulfur atoms from cysteine to produce alanine. Functions as a sulfur delivery protein for Fe-S cluster synthesis onto IscU, an Fe-S scaffold assembly protein, as well as other S acceptor proteins. The polypeptide is Cysteine desulfurase IscS (Rickettsia massiliae (strain Mtu5)).